Here is an 86-residue protein sequence, read N- to C-terminus: Kappa-theraphotoxin-Cg1a 5 (86 aa).

Positions 1-21 (MKVSVLITLAVLGVMFVWTSA) are cleaved as a signal peptide. The propeptide occupies 22–50 (AELEERGSDQRDSPAWLKSMERIFQSEER). 3 disulfide bridges follow: C52-C66, C59-C71, and C65-C78. F84 carries the post-translational modification Phenylalanine amide.

The protein belongs to the neurotoxin 10 (Hwtx-1) family. 28 (Jztx-11) subfamily. In terms of tissue distribution, expressed by the venom gland.

It localises to the secreted. Functionally, this toxin acts as a voltage-dependent gating-modifier. It inhibits the sodium conductance (IC(50)=124 nM) and slows the fast inactivation (EC(50)=1180 nM) of Nav1.5/SCN5A. It significantly shifts the activation to more depolarized voltages and decreases the deactivation of Nav1.5 currents upon extreme depolarization, but only slightly affects voltage-dependence of steady-state inactivation. In addition, this toxin causes an approximately five-fold decrease in the rate of recovery from inactivation and an approximately 1.9-fold reduction in the closed-state inactivation rate. This toxin integrates the functions of site 3 toxins (alpha-scorpion toxins) with site 4 toxins (beta-scorpion and spider toxins) by targeting multiple sites on Nav1.5. Also shows inhibition of voltage-gated potassium channels (5 uM completely inhibits Kv2.1/KCNB1, whereas 5 uM moderately inhibits Kv4.2/KCND2 Kv4.1/KCND1 channels). In Chilobrachys guangxiensis (Chinese earth tiger tarantula), this protein is Kappa-theraphotoxin-Cg1a 5.